The primary structure comprises 1257 residues: Elongation factor 2 (1257 aa).

Residues 273–402 (LAGLMFGDGC…LQLLLQKFDV (130 aa)) enclose the DOD-type homing endonuclease domain. In terms of domain architecture, tr-type G spans 541-782 (VEEHHNFAAE…MVVKHLPDPV (242 aa)). Residues 616–620 (DTPGH) and 670–673 (NKVD) each bind GTP. Position 1120 is a diphthamide (H1120). Positions 1237-1250 (ERKGLKPEPPKPED) are enriched in basic and acidic residues. The segment at 1237–1257 (ERKGLKPEPPKPEDYIEDYGG) is disordered.

This sequence belongs to the TRAFAC class translation factor GTPase superfamily. Classic translation factor GTPase family. EF-G/EF-2 subfamily. Post-translationally, this protein undergoes a protein self splicing that involves a post-translational excision of the intervening region (intein) followed by peptide ligation.

Its subcellular location is the cytoplasm. Functionally, catalyzes the GTP-dependent ribosomal translocation step during translation elongation. During this step, the ribosome changes from the pre-translocational (PRE) to the post-translocational (POST) state as the newly formed A-site-bound peptidyl-tRNA and P-site-bound deacylated tRNA move to the P and E sites, respectively. Catalyzes the coordinated movement of the two tRNA molecules, the mRNA and conformational changes in the ribosome. In Methanopyrus kandleri (strain AV19 / DSM 6324 / JCM 9639 / NBRC 100938), this protein is Elongation factor 2.